The following is a 234-amino-acid chain: NAD-dependent protein deacylase (234 aa).

The 234-residue stretch at 1-234 (MTKQVRIVVL…LVPHYLAQFL (234 aa)) folds into the Deacetylase sirtuin-type domain. 12-31 (GAGISAESGIRTFRATDGLW) serves as a coordination point for NAD(+). Substrate is bound by residues Tyr-56 and Arg-59. Position 93–96 (93–96 (QNVD)) interacts with NAD(+). The active-site Proton acceptor is His-111. Residues Cys-119 and Cys-138 each coordinate Zn(2+). NAD(+) contacts are provided by residues 178-180 (GTS), 204-206 (NLE), and Ala-222.

The protein belongs to the sirtuin family. Class III subfamily. Requires Zn(2+) as cofactor.

Its subcellular location is the cytoplasm. It catalyses the reaction N(6)-acetyl-L-lysyl-[protein] + NAD(+) + H2O = 2''-O-acetyl-ADP-D-ribose + nicotinamide + L-lysyl-[protein]. It carries out the reaction N(6)-succinyl-L-lysyl-[protein] + NAD(+) + H2O = 2''-O-succinyl-ADP-D-ribose + nicotinamide + L-lysyl-[protein]. NAD-dependent lysine deacetylase and desuccinylase that specifically removes acetyl and succinyl groups on target proteins. Modulates the activities of several proteins which are inactive in their acylated form. The protein is NAD-dependent protein deacylase of Pasteurella multocida (strain Pm70).